The sequence spans 82 residues: U-actitoxin-Avd3l (82 aa).

The first 16 residues, 1–16, serve as a signal peptide directing secretion; sequence MVFLLCFFLVADVSYG. The BPTI/Kunitz inhibitor domain maps to 21-71; it reads CLLPMDVGRCRARFPRYYYNSSSRRCEKFNYGGCGGNANNFHTLEECEKVC. Cystine bridges form between Cys21/Cys71, Cys30/Cys54, and Cys46/Cys67. A propeptide spanning residues 76–82 is cleaved from the precursor; it reads RDSPKEN.

This sequence belongs to the venom Kunitz-type family. Sea anemone type 2 potassium channel toxin subfamily.

The protein localises to the secreted. It is found in the nematocyst. Functionally, dual-function toxin that inhibits both the serine protease trypsin and voltage-gated potassium channels Kv1.2/KCNA2. The protein is U-actitoxin-Avd3l of Anemonia viridis (Snakelocks anemone).